The sequence spans 138 residues: Gamma-glutamylaminecyclotransferase (138 aa).

The Proton acceptor role is filled by Glu63.

The protein belongs to the gamma-glutamylcyclotransferase family.

It carries out the reaction epsilon-(gamma-L-glutamyl)-L-lysine = 5-oxo-L-proline + L-lysine. Functionally, may contribute to degradation of proteins cross-linked by transglutaminases by degrading the cross-link between a lysine and a glutamic acid residue. Catalyzes the formation of 5-oxo-L-proline from L-gamma-glutamyl-L-epsilon-lysine. The sequence is that of Gamma-glutamylaminecyclotransferase (ggact) from Xenopus laevis (African clawed frog).